The primary structure comprises 196 residues: Elongation factor Ts (196 aa).

The tract at residues 80-83 (TDFV) is involved in Mg(2+) ion dislocation from EF-Tu.

The protein belongs to the EF-Ts family.

Its subcellular location is the cytoplasm. Its function is as follows. Associates with the EF-Tu.GDP complex and induces the exchange of GDP to GTP. It remains bound to the aminoacyl-tRNA.EF-Tu.GTP complex up to the GTP hydrolysis stage on the ribosome. This is Elongation factor Ts from Thermosipho melanesiensis (strain DSM 12029 / CIP 104789 / BI429).